Consider the following 608-residue polypeptide: 2',5'-phosphodiesterase 12 (608 aa).

The transit peptide at 1–16 directs the protein to the mitochondrion; the sequence is MWRLPGRAALRGVRSV. A disordered region spans residues 91–111; sequence AKKSRKNRAHSSGGAACAATG. Positions 100 to 111 are enriched in low complexity; that stretch reads HSSGGAACAATG. The residue at position 216 (S216) is a Phosphoserine. Mg(2+) contacts are provided by E350, D495, and N497. Residue D495 is the Proton donor/acceptor of the active site.

The protein belongs to the CCR4/nocturin family. The cofactor is Mg(2+).

The protein resides in the mitochondrion matrix. It catalyses the reaction Exonucleolytic cleavage of poly(A) to 5'-AMP.. In terms of biological role, enzyme that cleaves 2',5'-phosphodiester bond linking adenosines of the 5'-triphosphorylated oligoadenylates, triphosphorylated oligoadenylates referred as 2-5A modulates the 2-5A system. Degrades triphosphorylated 2-5A to produce AMP and ATP. Also cleaves 3',5'-phosphodiester bond of oligoadenylates. Plays a role as a negative regulator of the 2-5A system that is one of the major pathways for antiviral and antitumor functions induced by interferons (IFNs). Suppression of this enzyme increases cellular 2-5A levels and decreases viral replication in cultured small-airway epithelial cells. This Rattus norvegicus (Rat) protein is 2',5'-phosphodiesterase 12 (Pde12).